The sequence spans 1819 residues: Gamma-tubulin complex component 6 (1819 aa).

Disordered regions lie at residues 810 to 889, 929 to 951, and 1000 to 1023; these read SEAH…GARP, LPPSAPGEAPAAASTQPSRPQEY, and RETLLPSHPPRRAALEEGSSQPTE. Repeat copies occupy residues 1027-1053, 1054-1080, 1081-1107, 1108-1134, 1135-1161, 1162-1188, 1189-1215, 1216-1242, and 1243-1269. A 9 X 27 AA tandem repeats region spans residues 1027–1269; the sequence is GQVSGGGLPT…VSTRPRWNTH (243 aa). Residues 1271 to 1412 form a disordered region; the sequence is PIPPPHMVLG…EAEASAAEAQ (142 aa). Positions 1297–1314 are enriched in polar residues; the sequence is PPGHTSQSALSLGAQSTV. A compositionally biased stretch (low complexity) spans 1321 to 1335; that stretch reads LPVEVGPSLSSPSSG. Polar residues predominate over residues 1384–1398; it reads WPLNSQEDTAAQSSP.

This sequence belongs to the TUBGCP family. As to quaternary structure, component of the gamma-tubulin ring complex (gTuRC) consisting of TUBGCP2, TUBGCP3, TUBGCP4, TUBGCP5 and TUBGCP6 and gamma-tubulin TUBG1 or TUBG2. TUBGCP2, TUBGCP3, TUBGCP4, TUBGCP5 and TUBGCP6 assemble in a 5:5:2:1:1 stoichiometry; each is associated with a gamma-tubulin, thereby arranging 14 gamma-tubulins in a helical manner. Gamma-tubulin at the first position is blocked by TUBGCP3 at the last position, allowing 13 protafilaments to grow into a microtubule. The gTuRC (via TUBGCP3 and TUBGCP6) interacts with ACTB and MZT1; the interactions form a luminal bridge that stabilizes the initial structure during complex assembly. The gTuRC (via TUBGCP2) interacts with MZT2A/MZT2B and CDK5RAP2 (via CM1 motif); the interactions play a role in gTuRC activation.

It is found in the cytoplasm. Its subcellular location is the cytoskeleton. The protein localises to the microtubule organizing center. It localises to the centrosome. Component of the gamma-tubulin ring complex (gTuRC) which mediates microtubule nucleation. The gTuRC regulates the minus-end nucleation of alpha-beta tubulin heterodimers that grow into microtubule protafilaments, a critical step in centrosome duplication and spindle formation. This Homo sapiens (Human) protein is Gamma-tubulin complex component 6 (TUBGCP6).